The following is a 346-amino-acid chain: Peripherin-2 (346 aa).

The Cytoplasmic segment spans residues 1 to 24 (MALMKTKFNLKRRVKLAQGLWLMN). A helical membrane pass occupies residues 25–43 (WCCVLAGIALFSMGVFLKI). The Lumenal segment spans residues 44-61 (ELRKRSEVMDNDESHFVP). A helical membrane pass occupies residues 62 to 80 (NSLILMGSLACALNAFPGK). The Cytoplasmic segment spans residues 81 to 99 (ICYDSLDPTKFPRWKPMLK). Residues 100-123 (PYLIICLIFNIFIFFTGVVCFLTR) traverse the membrane as a helical segment. The Lumenal portion of the chain corresponds to 124–264 (GSLESTLAHG…LNYYTSMMSS (141 aa)). N-linked (GlcNAc...) asparagine glycosylation occurs at asparagine 229. The helical transmembrane segment at 265-290 (MGGMVFLVWIMEMAVMIGLRFLHTCL) threads the bilayer. Residues 291-346 (ETIANPEDPECESEGWILEKSLKDTIKSSWELVKSMGKLNKVETAGGEEAGVATVS) lie on the Cytoplasmic side of the membrane.

It belongs to the PRPH2/ROM1 family. As to quaternary structure, homodimer; disulfide-linked. In terms of tissue distribution, found in both rod and cone photoreceptors. Specifically in the rims and incisures of rod and cone outer segment disks.

The protein resides in the membrane. Functionally, may be involved in the morphogenesis of retina outer segment disks and the development and maintenance of the retina ultrastructure. In Xenopus laevis (African clawed frog), this protein is Peripherin-2 (prph2).